We begin with the raw amino-acid sequence, 330 residues long: Putative F-box protein At1g57690 (330 aa).

The F-box domain occupies 25-72 (VDIISSLPDVILQHILFSFQTKYAIRTSVLSKRWRHEADAINKALSQY).

In Arabidopsis thaliana (Mouse-ear cress), this protein is Putative F-box protein At1g57690.